We begin with the raw amino-acid sequence, 689 residues long: Protein asunder (689 aa).

The stretch at 521 to 550 (NGARLKLSKAKDQYRLLYRELEQLIQLNAT) forms a coiled coil. 2 disordered regions span residues 592-619 (PERLEPISSVGASGSSSSNSLLKASKRR) and 665-689 (GTKDKDTVTTGASITPNVKEESVRS). Residues 599-614 (SSVGASGSSSSNSLLK) are compositionally biased toward low complexity. The short motif at 613–619 (LKASKRR) is the Nuclear localization signal (NLS) element.

The protein belongs to the Integrator subunit 13 family. In terms of assembly, belongs to the multiprotein complex Integrator, at least composed of IntS1, IntS2, IntS3, IntS4, omd/IntS5, IntS6, defl/IntS7, IntS8, IntS9, IntS10, IntS11, IntS12, asun/IntS13, IntS14 and IntS15. The core complex associates with protein phosphatase 2A subunits mts/PP2A and Pp2A-29B, to form the Integrator-PP2A (INTAC) complex. Phosphorylated. As to expression, expressed in nurse cells at stages 9-10 of oogenesis and exported to the oocyte. Also expressed in the follicle cells surrounding the oocyte.

It localises to the nucleus. Its subcellular location is the cytoplasm. The protein resides in the perinuclear region. Functionally, component of the integrator complex, a multiprotein complex that terminates RNA polymerase II (Pol II) transcription in the promoter-proximal region of genes. The integrator complex provides a quality checkpoint during transcription elongation by driving premature transcription termination of transcripts that are unfavorably configured for transcriptional elongation: the complex terminates transcription by (1) catalyzing dephosphorylation of the C-terminal domain (CTD) of Pol II subunit Polr2A/Rbp1 and Spt5, and (2) degrading the exiting nascent RNA transcript via endonuclease activity. The integrator complex is also involved in the 3'-end processing of the U7 snRNA, and also the spliceosomal snRNAs U1, U2, U4 and U5. Plays a role as a regulator of spermatogenesis. Crucial regulator of the mitotic cell cycle and development. Required for the correct dynein-dynactin perinuclear localization important for nucleus-centrosome coupling that occur upon meiotic progression of primary spermatocytes. Plays a role in sperm motility and fertility. May have a role in the PNG/PLU/GNU pathway. The polypeptide is Protein asunder (Drosophila melanogaster (Fruit fly)).